The sequence spans 101 residues: Small ribosomal subunit protein uS10 (101 aa).

This sequence belongs to the universal ribosomal protein uS10 family. Part of the 30S ribosomal subunit.

Functionally, involved in the binding of tRNA to the ribosomes. The polypeptide is Small ribosomal subunit protein uS10 (Mycobacterium avium (strain 104)).